Here is a 673-residue protein sequence, read N- to C-terminus: Annexin A6 (673 aa).

An N-acetylalanine modification is found at alanine 2. At serine 13 the chain carries Phosphoserine. 8 Annexin repeats span residues 20 to 91 (FDAN…NLMR), 92 to 163 (PLAY…VLLQ), 175 to 247 (DLVQ…AVVK), 251 to 322 (STPE…KLCG), 363 to 434 (FNPD…GLMM), 435 to 506 (PPAH…SLAT), 521 to 595 (EDAQ…AIVQ), and 599 to 670 (NKPL…ALCG). At tyrosine 30 the chain carries Phosphotyrosine. 4 positions are modified to N6-acetyllysine: lysine 63, lysine 68, lysine 75, and lysine 81. Phosphotyrosine is present on tyrosine 201. 3 positions are modified to N6-acetyllysine: lysine 306, lysine 370, and lysine 418. Residue serine 422 is modified to Phosphoserine. Lysine 483 carries the post-translational modification N6-acetyllysine. Residue serine 537 is modified to Phosphoserine. Lysine 620 carries the post-translational modification N6-acetyllysine.

It belongs to the annexin family.

It is found in the cytoplasm. The protein localises to the melanosome. Functionally, may associate with CD21. May regulate the release of Ca(2+) from intracellular stores. In Mus musculus (Mouse), this protein is Annexin A6 (Anxa6).